Reading from the N-terminus, the 146-residue chain is Multiple coagulation factor deficiency protein 2 (146 aa).

A signal peptide spans 1 to 26 (MTMRSLLRTPFLCGLLWAFCAPGARA). The EF-hand 1 domain maps to 68 to 103 (SPQELQLHYFKMHDYDGNNLLDGLELSTAITHVHKE). Ca(2+) contacts are provided by D81, D83, N85, and E92. S106 bears the Phosphoserine mark. Residues 116-146 (ELINIIDGVLRDDDKNNDGYIDYAEFAKSLQ) form the EF-hand 2 domain. D129, N131, D133, Y135, and E140 together coordinate Ca(2+).

Interacts in a calcium-dependent manner with LMAN1.

It is found in the endoplasmic reticulum-Golgi intermediate compartment. It localises to the endoplasmic reticulum. Its subcellular location is the golgi apparatus. In terms of biological role, the MCFD2-LMAN1 complex forms a specific cargo receptor for the ER-to-Golgi transport of selected proteins. Plays a role in the secretion of coagulation factors. In Homo sapiens (Human), this protein is Multiple coagulation factor deficiency protein 2 (MCFD2).